The primary structure comprises 603 residues: Myotubularin (603 aa).

Residues 1–13 are compositionally biased toward polar residues; that stretch reads MASAPTSKYNSHS. The segment at 1 to 32 is disordered; the sequence is MASAPTSKYNSHSLENESIKRTSRDGVNRDVG. A phosphoserine mark is found at serine 13 and serine 18. Residues 14–32 are compositionally biased toward basic and acidic residues; the sequence is LENESIKRTSRDGVNRDVG. Residues 29 to 97 enclose the GRAM domain; sequence RDVGETLPRL…GVISRIEKMG (69 aa). In terms of domain architecture, Myotubularin phosphatase spans 163 to 538; the sequence is GWTVYNPVEE…RHLELWVNYY (376 aa). Positions 288, 313, and 314 each coordinate a 1,2-diacyl-sn-glycero-3-phospho-(1D-myo-inositol-3,5-bisphosphate). Positions 288, 313, and 314 each coordinate a 1,2-diacyl-sn-glycero-3-phospho-(1D-myo-inositol-3-phosphate). Cysteine 375 serves as the catalytic Phosphocysteine intermediate. Positions 376, 377, 378, 379, 380, 381, 417, and 421 each coordinate a 1,2-diacyl-sn-glycero-3-phospho-(1D-myo-inositol-3,5-bisphosphate). 6 residues coordinate a 1,2-diacyl-sn-glycero-3-phospho-(1D-myo-inositol-3-phosphate): serine 376, aspartate 377, glycine 378, tryptophan 379, aspartate 380, and arginine 381. Arginine 421 contributes to the a 1,2-diacyl-sn-glycero-3-phospho-(1D-myo-inositol-3-phosphate) binding site. Residue threonine 495 is modified to Phosphothreonine. The tract at residues 580–603 is disordered; sequence AKLSDPSASPSSPSQMMPHVQTHF. Positions 583–593 are enriched in low complexity; it reads SDPSASPSSPS. Phosphoserine is present on serine 588.

This sequence belongs to the protein-tyrosine phosphatase family. Non-receptor class myotubularin subfamily. As to quaternary structure, heterodimer with MTMR12. Interacts with KMT2A/MLL1 (via SET domain). Interacts with DES in skeletal muscle but not in cardiac muscle. Interacts with SPEG.

It localises to the cytoplasm. Its subcellular location is the cell membrane. The protein localises to the cell projection. The protein resides in the filopodium. It is found in the ruffle. It localises to the late endosome. Its subcellular location is the myofibril. The protein localises to the sarcomere. The catalysed reaction is a 1,2-diacyl-sn-glycero-3-phospho-(1D-myo-inositol-3-phosphate) + H2O = a 1,2-diacyl-sn-glycero-3-phospho-(1D-myo-inositol) + phosphate. The enzyme catalyses a 1,2-diacyl-sn-glycero-3-phospho-(1D-myo-inositol-3,5-bisphosphate) + H2O = a 1,2-diacyl-sn-glycero-3-phospho-(1D-myo-inositol-5-phosphate) + phosphate. It carries out the reaction 1,2-dioctanoyl-sn-glycero-3-phospho-(1-D-myo-inositol-3-phosphate) + H2O = 1,2-dioctanoyl-sn-glycero-3-phospho-(1D-myo-inositol) + phosphate. It catalyses the reaction 1,2-dioctanoyl-sn-glycero-3-phospho-(1D-myo-inositol-3,5-bisphosphate) + H2O = 1,2-dioctanoyl-sn-glycero-3-phospho-(1D-myo-inositol-5-phosphate) + phosphate. The catalysed reaction is 1,2-dihexadecanoyl-sn-glycero-3-phospho-(1D-myo-inositol-3,5-phosphate) + H2O = 1,2-dihexadecanoyl-sn-glycero-3-phospho-(1D-myo-inositol-5-phosphate) + phosphate. With respect to regulation, allosterically activated by phosphatidylinositol 5-phosphate (PI5P). Functionally, lipid phosphatase which dephosphorylates phosphatidylinositol 3-monophosphate (PI3P) and phosphatidylinositol 3,5-bisphosphate (PI(3,5)P2). Has also been shown to dephosphorylate phosphotyrosine- and phosphoserine-containing peptides. Negatively regulates EGFR degradation through regulation of EGFR trafficking from the late endosome to the lysosome. Plays a role in vacuolar formation and morphology. Regulates desmin intermediate filament assembly and architecture. Plays a role in mitochondrial morphology and positioning. Required for skeletal muscle maintenance but not for myogenesis. In skeletal muscles, stabilizes MTMR12 protein levels. This chain is Myotubularin, found in Bos taurus (Bovine).